Here is a 242-residue protein sequence, read N- to C-terminus: 3-oxoacyl-[acyl-carrier-protein] reductase FabG (242 aa).

NADP(+) is bound by residues 9 to 12, Arg-34, 60 to 61, and Asn-87; these read GSSR and DV. Residue Ser-140 participates in substrate binding. The active-site Proton acceptor is Tyr-153. Residues 153–157 and Ile-186 contribute to the NADP(+) site; that span reads YSASK.

The protein belongs to the short-chain dehydrogenases/reductases (SDR) family. In terms of assembly, homotetramer.

It carries out the reaction a (3R)-hydroxyacyl-[ACP] + NADP(+) = a 3-oxoacyl-[ACP] + NADPH + H(+). The protein operates within lipid metabolism; fatty acid biosynthesis. In terms of biological role, catalyzes the NADPH-dependent reduction of beta-ketoacyl-ACP substrates to beta-hydroxyacyl-ACP products, the first reductive step in the elongation cycle of fatty acid biosynthesis. The protein is 3-oxoacyl-[acyl-carrier-protein] reductase FabG (fabG) of Aggregatibacter actinomycetemcomitans (Actinobacillus actinomycetemcomitans).